The sequence spans 276 residues: MHKIFSKNNLIFFVFGAFIFVMIVLQFFVSSENATKVNLSQTFEPISWLHLLGTDDYGRDLFTRIIIGARSTLFVTVLTLIAIVVIGVTLGLFAGYKKGWIERLVLRFIDVGLSIPEFIIVIALASFFQPSLWNLVISITIIKWMNYTRLTRSIVNSEMNKPYIKMAQLFHVPTRTILIRHLTPKIIPAIIVLMVVDFGKIILYISSLSFIGLGSQPPTPEWGAMLQQGRDFISSHPIMLIAPASVIAITILIFNLTGDALRDRLLKQRGEYDESH.

5 helical membrane-spanning segments follow: residues 10 to 30 (LIFFVFGAFIFVMIVLQFFVS), 73 to 93 (LFVTVLTLIAIVVIGVTLGLF), 108 to 128 (FIDVGLSIPEFIIVIALASFF), 186 to 206 (IIPAIIVLMVVDFGKIILYIS), and 238 to 258 (IMLIAPASVIAITILIFNLTG). The ABC transmembrane type-1 domain maps to 69 to 258 (ARSTLFVTVL…ITILIFNLTG (190 aa)).

This sequence belongs to the binding-protein-dependent transport system permease family. OppBC subfamily. In terms of assembly, the complex is composed of two ATP-binding proteins (NikD and NikE), two transmembrane proteins (NikB and NikC) and a solute-binding protein (NikA).

It localises to the cell membrane. Its function is as follows. Part of the ABC transporter complex NikABCDE (Opp2) involved in nickel import. Probably responsible for the translocation of the substrate across the membrane. The sequence is that of Nickel import system permease protein NikC from Staphylococcus aureus (strain bovine RF122 / ET3-1).